Reading from the N-terminus, the 210-residue chain is Outer-membrane lipoprotein LolB (210 aa).

Positions 1–19 (MNHLKSFFTALVAGFILTA) are cleaved as a signal peptide. Cys20 carries N-palmitoyl cysteine lipidation. The S-diacylglycerol cysteine moiety is linked to residue Cys20.

This sequence belongs to the LolB family. As to quaternary structure, monomer.

The protein resides in the cell outer membrane. Functionally, plays a critical role in the incorporation of lipoproteins in the outer membrane after they are released by the LolA protein. The polypeptide is Outer-membrane lipoprotein LolB (Mannheimia succiniciproducens (strain KCTC 0769BP / MBEL55E)).